Here is a 236-residue protein sequence, read N- to C-terminus: Adenosine 5'-phosphosulfate reductase (236 aa).

[4Fe-4S] cluster-binding residues include Cys-123, Cys-124, Cys-206, and Cys-209. The active-site Nucleophile; cysteine thiosulfonate intermediate is Cys-232.

It belongs to the PAPS reductase family. CysH subfamily. The cofactor is [4Fe-4S] cluster.

Its subcellular location is the cytoplasm. It carries out the reaction [thioredoxin]-disulfide + sulfite + AMP + 2 H(+) = adenosine 5'-phosphosulfate + [thioredoxin]-dithiol. The protein operates within sulfur metabolism; hydrogen sulfide biosynthesis; sulfite from sulfate. Catalyzes the formation of sulfite from adenosine 5'-phosphosulfate (APS) using thioredoxin as an electron donor. The protein is Adenosine 5'-phosphosulfate reductase of Streptomyces coelicolor (strain ATCC BAA-471 / A3(2) / M145).